A 659-amino-acid polypeptide reads, in one-letter code: Alpha-galactosidase D (659 aa).

The signal sequence occupies residues 1–20 (MRALVPMVVAATALASPAPA). N48, N86, and N130 each carry an N-linked (GlcNAc...) asparagine glycan. A disulfide bridge connects residues C125 and C158. D156 functions as the Nucleophile in the catalytic mechanism. N-linked (GlcNAc...) asparagine glycosylation is present at N183. Substrate is bound at residue 201–205 (EWGID). D223 acts as the Proton donor in catalysis. N438, N450, N484, N551, and N583 each carry an N-linked (GlcNAc...) asparagine glycan.

It belongs to the glycosyl hydrolase 27 family.

The protein resides in the secreted. It catalyses the reaction Hydrolysis of terminal, non-reducing alpha-D-galactose residues in alpha-D-galactosides, including galactose oligosaccharides, galactomannans and galactolipids.. In terms of biological role, hydrolyzes a variety of simple alpha-D-galactoside as well as more complex molecules such as oligosaccharides and polysaccharides. Active on paranitrophenyl-alpha-galactoside but not on raffinose, locust bean gum and gum guar. This Emericella nidulans (strain FGSC A4 / ATCC 38163 / CBS 112.46 / NRRL 194 / M139) (Aspergillus nidulans) protein is Alpha-galactosidase D (aglD).